Reading from the N-terminus, the 316-residue chain is MSAEVETSEGVDESEKKNSGALEKENQMRMADLSELLKEGTKEAHDRAENTQFVKDFLKGNIKKELFKLATTALYFTYSALEEEMERNKDHPTFAPLYFPMELHRKEALTKDMEYFFGENWEEQVQCPKAAKKYVERIHYIGQNEPELLVAHAYTRYMGDLSGGQVLKKVAQRALKLPSTGEGTQFYLFENVDNAQQFKQLYRARMNALDLNMKTKERIVEEANKAFEYNMQIFNELDQAGSTLARETLEDGFPVHDGKGDMRKCPFYAGEQDKGALEGSSCPFRTAMAVLRKPSLQFILAAGMALAAGLLAWYYM.

Acidic residues predominate over residues 1-12; the sequence is MSAEVETSEGVD. Residues 1-29 form a disordered region; the sequence is MSAEVETSEGVDESEKKNSGALEKENQMR. N-acetylserine is present on Ser-2. Ser-2 carries the phosphoserine modification. The segment covering 13 to 27 has biased composition (basic and acidic residues); the sequence is ESEKKNSGALEKENQ. His-45 serves as a coordination point for heme b. HRM repeat units follow at residues 264 to 269 and 281 to 286; these read KCPFYA and SCPFRT. S-nitrosocysteine occurs at positions 265 and 282.

It belongs to the heme oxygenase family. Post-translationally, S-nitrosylated by BLVRB.

Its subcellular location is the microsome. It is found in the endoplasmic reticulum. The enzyme catalyses heme b + 3 reduced [NADPH--hemoprotein reductase] + 3 O2 = biliverdin IXalpha + CO + Fe(2+) + 3 oxidized [NADPH--hemoprotein reductase] + 3 H2O + H(+). Its function is as follows. Heme oxygenase cleaves the heme ring at the alpha methene bridge to form biliverdin. Biliverdin is subsequently converted to bilirubin by biliverdin reductase. Under physiological conditions, the activity of heme oxygenase is highest in the spleen, where senescent erythrocytes are sequestrated and destroyed. Heme oxygenase 2 could be implicated in the production of carbon monoxide in brain where it could act as a neurotransmitter. The sequence is that of Heme oxygenase 2 (HMOX2) from Macaca fascicularis (Crab-eating macaque).